Here is a 91-residue protein sequence, read N- to C-terminus: Small ribosomal subunit protein bS20 (91 aa).

The tract at residues 1 to 23 (MANTPSAKKRAKQAEKRRSHNAS) is disordered. Basic residues predominate over residues 7 to 20 (AKKRAKQAEKRRSH).

The protein belongs to the bacterial ribosomal protein bS20 family.

Its function is as follows. Binds directly to 16S ribosomal RNA. In Pseudomonas paraeruginosa (strain DSM 24068 / PA7) (Pseudomonas aeruginosa (strain PA7)), this protein is Small ribosomal subunit protein bS20.